The chain runs to 355 residues: NADH-quinone oxidoreductase subunit H (355 aa).

8 consecutive transmembrane segments (helical) span residues 25–45, 91–111, 126–146, 170–190, 205–225, 253–273, 290–310, and 330–350; these read LVRILVVAVVILLCVAYLILW, WLYLVAPVMTVVPAFAVWAVI, LLYAMAISSIGVYAVILAGWA, MGFALVLVLMTAGSLNLSEIV, FLSWNWLPLLPAFVVYFVSGI, MAFALFFLAEYINMIVISALA, FIPGIFWLVLKVFALLSVFIW, and VFLPVTVIWVVVVGFWMMSPL.

This sequence belongs to the complex I subunit 1 family. NDH-1 is composed of 14 different subunits. Subunits NuoA, H, J, K, L, M, N constitute the membrane sector of the complex.

It localises to the cell inner membrane. It carries out the reaction a quinone + NADH + 5 H(+)(in) = a quinol + NAD(+) + 4 H(+)(out). NDH-1 shuttles electrons from NADH, via FMN and iron-sulfur (Fe-S) centers, to quinones in the respiratory chain. The immediate electron acceptor for the enzyme in this species is believed to be ubiquinone. Couples the redox reaction to proton translocation (for every two electrons transferred, four hydrogen ions are translocated across the cytoplasmic membrane), and thus conserves the redox energy in a proton gradient. This subunit may bind ubiquinone. This chain is NADH-quinone oxidoreductase subunit H, found in Burkholderia vietnamiensis (strain G4 / LMG 22486) (Burkholderia cepacia (strain R1808)).